The chain runs to 397 residues: Phosphoglycerate kinase (397 aa).

Substrate is bound by residues 22-24 (DYN), Arg-38, 61-64 (HLGR), Arg-119, and Arg-152. ATP is bound by residues Lys-203, Gly-294, Glu-325, and 351–354 (GGDT).

Belongs to the phosphoglycerate kinase family. As to quaternary structure, monomer.

It localises to the cytoplasm. The enzyme catalyses (2R)-3-phosphoglycerate + ATP = (2R)-3-phospho-glyceroyl phosphate + ADP. It participates in carbohydrate degradation; glycolysis; pyruvate from D-glyceraldehyde 3-phosphate: step 2/5. The protein is Phosphoglycerate kinase (pgk) of Aquifex aeolicus (strain VF5).